The primary structure comprises 388 residues: Formate-dependent phosphoribosylglycinamide formyltransferase (388 aa).

N(1)-(5-phospho-beta-D-ribosyl)glycinamide contacts are provided by residues 21 to 22 and glutamate 81; that span reads EL. ATP is bound by residues arginine 113, lysine 154, 159 to 164, 193 to 196, and glutamate 201; these read SSGHGQ and EEFI. The ATP-grasp domain occupies 118–306; sequence KFAAEELGLK…EFALHVRAVL (189 aa). Mg(2+)-binding residues include glutamate 265 and glutamate 277. N(1)-(5-phospho-beta-D-ribosyl)glycinamide is bound by residues aspartate 284, lysine 352, and 359–360; that span reads RR.

It belongs to the PurK/PurT family. Homodimer.

The enzyme catalyses N(1)-(5-phospho-beta-D-ribosyl)glycinamide + formate + ATP = N(2)-formyl-N(1)-(5-phospho-beta-D-ribosyl)glycinamide + ADP + phosphate + H(+). It functions in the pathway purine metabolism; IMP biosynthesis via de novo pathway; N(2)-formyl-N(1)-(5-phospho-D-ribosyl)glycinamide from N(1)-(5-phospho-D-ribosyl)glycinamide (formate route): step 1/1. Involved in the de novo purine biosynthesis. Catalyzes the transfer of formate to 5-phospho-ribosyl-glycinamide (GAR), producing 5-phospho-ribosyl-N-formylglycinamide (FGAR). Formate is provided by PurU via hydrolysis of 10-formyl-tetrahydrofolate. This chain is Formate-dependent phosphoribosylglycinamide formyltransferase, found in Nitratiruptor sp. (strain SB155-2).